A 442-amino-acid chain; its full sequence is Dol-P-Man:Man(5)GlcNAc(2)-PP-Dol alpha-1,3-mannosyltransferase (442 aa).

Residues 1 to 34 (MAAPSSRPESNPPLYKQALDFALDVANGRHALSK) are Lumenal-facing. Residues 35–55 (LIPPALFLVDALLCGLIIWKV) form a helical membrane-spanning segment. Residues 56–84 (PYTEIDWAAYMEQVSQILSGERDYTKVRG) lie on the Cytoplasmic side of the membrane. The chain crosses the membrane as a helical span at residues 85–105 (GTGPLVYPAAHVYIYTGLYHL). The Lumenal portion of the chain corresponds to 106 to 111 (TDEGRN). Residues 112 to 132 (ILLAQQLFAGLYMVTLAVVMG) traverse the membrane as a helical segment. The Cytoplasmic portion of the chain corresponds to 133-155 (CYWQAKAPPYLFPLLTLSKRLHS). The helical transmembrane segment at 156–176 (IFVLRCFNDCFAVLFLWLAIF) threads the bilayer. Over 177-198 (FFQRRNWQAGALLYTLGLGVKM) the chain is Lumenal. Residues 199-219 (TLLLSLPAVGIVLFLGSGSFV) traverse the membrane as a helical segment. A topological domain (cytoplasmic) is located at residue threonine 220. A helical transmembrane segment spans residues 221–241 (TLQLVATMGLVQILIGVPFLA). The Lumenal portion of the chain corresponds to 242–272 (HYPTEYLSRAFELSRQFFFKWTVNWRFVGEE). The chain crosses the membrane as a helical span at residues 273-293 (IFLSKGFALTLLALHVLVLGI). Residues 294-333 (FITTRWIKPARKSLVQLISPVLLAGKPPLTVPEHRAAARD) are Cytoplasmic-facing. Residues 334–354 (VTPRYIMTTILSANAVGLLFA) form a helical membrane-spanning segment. At 355–376 (RSLHYQFYAYVAWSTPFLLWRA) the chain is on the lumenal side. A helical transmembrane segment spans residues 377–397 (GLHPVLVYLLWAVHEWAWNVF). At 398-401 (PSTP) the chain is on the cytoplasmic side. A helical membrane pass occupies residues 402 to 422 (ASSAVVVGVLGVTVAGVWFGA). Over 423 to 442 (REEWEPGMKSSSKKEEAAMR) the chain is Lumenal.

This sequence belongs to the glycosyltransferase ALG3 family.

Its subcellular location is the endoplasmic reticulum membrane. It catalyses the reaction an alpha-D-Man-(1-&gt;2)-alpha-D-Man-(1-&gt;2)-alpha-D-Man-(1-&gt;3)-[alpha-D-Man-(1-&gt;6)]-beta-D-Man-(1-&gt;4)-beta-D-GlcNAc-(1-&gt;4)-alpha-D-GlcNAc-diphospho-di-trans,poly-cis-dolichol + a di-trans,poly-cis-dolichyl beta-D-mannosyl phosphate = an alpha-D-Man-(1-&gt;2)-alpha-D-Man-(1-&gt;2)-alpha-D-Man-(1-&gt;3)-[alpha-D-Man-(1-&gt;3)-alpha-D-Man-(1-&gt;6)]-beta-D-Man-(1-&gt;4)-beta-D-GlcNAc-(1-&gt;4)-alpha-D-GlcNAc-diphospho-di-trans,poly-cis-dolichol + a di-trans,poly-cis-dolichyl phosphate + H(+). It participates in protein modification; protein glycosylation. Its function is as follows. Dol-P-Man:Man(5)GlcNAc(2)-PP-Dol alpha-1,3-mannosyltransferase that operates in the biosynthetic pathway of dolichol-linked oligosaccharides, the glycan precursors employed in protein asparagine (N)-glycosylation. The assembly of dolichol-linked oligosaccharides begins on the cytosolic side of the endoplasmic reticulum membrane and finishes in its lumen. The sequential addition of sugars to dolichol pyrophosphate produces dolichol-linked oligosaccharides containing fourteen sugars, including two GlcNAcs, nine mannoses and three glucoses. Once assembled, the oligosaccharide is transferred from the lipid to nascent proteins by oligosaccharyltransferases. In the lumen of the endoplasmic reticulum, adds the first dolichyl beta-D-mannosyl phosphate derived mannose in an alpha-1,3 linkage to Man(5)GlcNAc(2)-PP-dolichol to produce Man(6)GlcNAc(2)-PP-dolichol. This is Dol-P-Man:Man(5)GlcNAc(2)-PP-Dol alpha-1,3-mannosyltransferase (alg-3) from Neurospora crassa (strain ATCC 24698 / 74-OR23-1A / CBS 708.71 / DSM 1257 / FGSC 987).